The primary structure comprises 881 residues: Tyrosine-protein kinase receptor TYRO3 (881 aa).

An N-terminal signal peptide occupies residues M1–A28. Ig-like C2-type domains are found at residues L29 to S114 and P125 to E206. Topologically, residues L29 to W414 are extracellular. N37 and N49 each carry an N-linked (GlcNAc...) asparagine glycan. Cysteines 50 and 103 form a disulfide. N143 carries an N-linked (GlcNAc...) asparagine glycan. A disulfide bond links C146 and C189. 2 consecutive Fibronectin type-III domains span residues P213–K306 and I311–E401. N-linked (GlcNAc...) asparagine glycosylation is found at N216, N279, N351, and N365. Residues V415–F435 form a helical membrane-spanning segment. The Cytoplasmic portion of the chain corresponds to L436–L881. One can recognise a Protein kinase domain in the interval F503–I774. Residues L509–V517 and K535 each bind ATP. The active-site Proton acceptor is the D640. Residue Y671 is modified to Phosphotyrosine; by autocatalysis. The segment at E846 to L881 is disordered. Positions E862 to E874 are enriched in acidic residues.

Belongs to the protein kinase superfamily. Tyr protein kinase family. AXL/UFO subfamily. Tyrosine phosphorylated upon receptor stimulation.

The protein resides in the cell membrane. The catalysed reaction is L-tyrosyl-[protein] + ATP = O-phospho-L-tyrosyl-[protein] + ADP + H(+). In terms of biological role, may be involved in cell adhesion processes, particularly in the central nervous system. The sequence is that of Tyrosine-protein kinase receptor TYRO3 (tyro3) from Xenopus tropicalis (Western clawed frog).